A 369-amino-acid chain; its full sequence is Deacetylase EF_0837 (369 aa).

Zn(2+) is bound by residues H58, H60, K152, H186, H209, and D270. Residue K152 is modified to N6-carboxylysine.

It belongs to the metallo-dependent hydrolases superfamily. Atu3266/EF_0837 deacetylase family. The cofactor is Zn(2+).

Its function is as follows. Esterase that can catalyze the deacetylation of acetyl-(R)-mandelate, but with very low efficiency (in vitro). The polypeptide is Deacetylase EF_0837 (Enterococcus faecalis (strain ATCC 700802 / V583)).